A 212-amino-acid chain; its full sequence is 3-isopropylmalate dehydratase small subunit (212 aa).

Belongs to the LeuD family. LeuD type 1 subfamily. As to quaternary structure, heterodimer of LeuC and LeuD.

The enzyme catalyses (2R,3S)-3-isopropylmalate = (2S)-2-isopropylmalate. Its pathway is amino-acid biosynthesis; L-leucine biosynthesis; L-leucine from 3-methyl-2-oxobutanoate: step 2/4. In terms of biological role, catalyzes the isomerization between 2-isopropylmalate and 3-isopropylmalate, via the formation of 2-isopropylmaleate. This is 3-isopropylmalate dehydratase small subunit from Pseudomonas aeruginosa (strain UCBPP-PA14).